The following is a 154-amino-acid chain: Large ribosomal subunit protein uL13 (154 aa).

Belongs to the universal ribosomal protein uL13 family. Part of the 50S ribosomal subunit.

Its function is as follows. This protein is one of the early assembly proteins of the 50S ribosomal subunit, although it is not seen to bind rRNA by itself. It is important during the early stages of 50S assembly. This chain is Large ribosomal subunit protein uL13, found in Bradyrhizobium diazoefficiens (strain JCM 10833 / BCRC 13528 / IAM 13628 / NBRC 14792 / USDA 110).